Reading from the N-terminus, the 100-residue chain is Urease subunit gamma (100 aa).

The protein belongs to the urease gamma subunit family. Heterotrimer of UreA (gamma), UreB (beta) and UreC (alpha) subunits. Three heterotrimers associate to form the active enzyme.

The protein resides in the cytoplasm. It carries out the reaction urea + 2 H2O + H(+) = hydrogencarbonate + 2 NH4(+). It functions in the pathway nitrogen metabolism; urea degradation; CO(2) and NH(3) from urea (urease route): step 1/1. The chain is Urease subunit gamma from Delftia acidovorans (strain DSM 14801 / SPH-1).